The chain runs to 49 residues: Large ribosomal subunit protein bL33B (49 aa).

It belongs to the bacterial ribosomal protein bL33 family.

This is Large ribosomal subunit protein bL33B from Bacillus anthracis.